A 147-amino-acid polypeptide reads, in one-letter code: uncharacterized protein (147 aa).

Residues 1–147 (MEIRRADKDD…RPESGGSGSE (147 aa)) form the N-acetyltransferase domain.

The protein belongs to the acetyltransferase family.

This is an uncharacterized protein from Archaeoglobus fulgidus (strain ATCC 49558 / DSM 4304 / JCM 9628 / NBRC 100126 / VC-16).